The sequence spans 474 residues: UDP-N-acetylmuramoylalanine--D-glutamate ligase (474 aa).

134–140 is a binding site for ATP; it reads GSNGKST.

Belongs to the MurCDEF family.

Its subcellular location is the cytoplasm. It catalyses the reaction UDP-N-acetyl-alpha-D-muramoyl-L-alanine + D-glutamate + ATP = UDP-N-acetyl-alpha-D-muramoyl-L-alanyl-D-glutamate + ADP + phosphate + H(+). It participates in cell wall biogenesis; peptidoglycan biosynthesis. Cell wall formation. Catalyzes the addition of glutamate to the nucleotide precursor UDP-N-acetylmuramoyl-L-alanine (UMA). In Thiobacillus denitrificans (strain ATCC 25259 / T1), this protein is UDP-N-acetylmuramoylalanine--D-glutamate ligase.